A 160-amino-acid chain; its full sequence is MSDLCPVYAPFFGSIGCAAAIVFTCFGASYGTAKSGVGICATSVTRPDLLVKNVVPVVMAGIIAIYGLVVSVLVSDSLSQKQALYTGFIQLGAGLSVGLSGLAAGFAIGIVGDAGVRGTAQQPRLFVGMILILIFAEVLGLYGLIVALLLNSRASQDVTC.

Over M1 to P6 the chain is Lumenal. Residues V7–G27 form a helical membrane-spanning segment. The Cytoplasmic segment spans residues A28 to N53. The chain crosses the membrane as a helical span at residues V54–V74. Topologically, residues S75–Q90 are lumenal. Residues L91–V111 form a helical membrane-spanning segment. At G112–M129 the chain is on the cytoplasmic side. Residues I130–L150 form a helical membrane-spanning segment. Over N151–C160 the chain is Lumenal.

This sequence belongs to the V-ATPase proteolipid subunit family. As to quaternary structure, V-ATPase is a heteromultimeric enzyme composed of a peripheral catalytic V1 complex (components A to H) attached to an integral membrane V0 proton pore complex (components: a, c, c', c'', d, e, f and VOA1). The decameric c-ring forms the proton-conducting pore, and is composed of eight proteolipid subunits c, one subunit c' and one subunit c''.

It is found in the vacuole membrane. Functionally, proton-conducting pore forming subunit of the V0 complex of vacuolar(H+)-ATPase (V-ATPase), a multisubunit enzyme composed of a peripheral complex (V1) that hydrolyzes ATP and a membrane integral complex (V0) that translocates protons. V-ATPase is responsible for acidifying and maintaining the pH of intracellular compartments. This is V-type proton ATPase subunit c (VMA3) from Candida tropicalis (Yeast).